The chain runs to 141 residues: Fluoride-specific ion channel FluC 1 (141 aa).

Helical transmembrane passes span 12–32 (LYAL…LVGV), 44–64 (WATL…AAIA), 79–99 (FVMT…LETF), and 107–127 (ALAA…AVWL). Residues Gly-86 and Thr-89 each contribute to the Na(+) site.

The protein belongs to the fluoride channel Fluc/FEX (TC 1.A.43) family.

It localises to the cell inner membrane. The enzyme catalyses fluoride(in) = fluoride(out). With respect to regulation, na(+) is not transported, but it plays an essential structural role and its presence is essential for fluoride channel function. Functionally, fluoride-specific ion channel. Important for reducing fluoride concentration in the cell, thus reducing its toxicity. This chain is Fluoride-specific ion channel FluC 1, found in Rhodopseudomonas palustris (strain BisB18).